The primary structure comprises 633 residues: Peptidoglycan D,D-transpeptidase MrdA (633 aa).

Residues 22–42 (LVAFLGILLLTGVLIANLYNL) traverse the membrane as a helical segment. Serine 330 acts as the Acyl-ester intermediate in catalysis.

The protein belongs to the transpeptidase family. MrdA subfamily.

The protein localises to the cell inner membrane. It carries out the reaction Preferential cleavage: (Ac)2-L-Lys-D-Ala-|-D-Ala. Also transpeptidation of peptidyl-alanyl moieties that are N-acyl substituents of D-alanine.. Its pathway is cell wall biogenesis; peptidoglycan biosynthesis. In terms of biological role, catalyzes cross-linking of the peptidoglycan cell wall. In Escherichia coli O157:H7, this protein is Peptidoglycan D,D-transpeptidase MrdA.